The chain runs to 673 residues: DNA ligase (673 aa).

Residues Asp-35 to Asp-39, Ser-84 to Leu-85, and Glu-115 contribute to the NAD(+) site. Lys-117 functions as the N6-AMP-lysine intermediate in the catalytic mechanism. Residues Arg-138, Glu-178, Lys-294, and Lys-318 each coordinate NAD(+). The Zn(2+) site is built by Cys-412, Cys-415, Cys-430, and Cys-435. Residues Leu-594 to Glu-673 form the BRCT domain.

It belongs to the NAD-dependent DNA ligase family. LigA subfamily. Mg(2+) serves as cofactor. It depends on Mn(2+) as a cofactor.

It carries out the reaction NAD(+) + (deoxyribonucleotide)n-3'-hydroxyl + 5'-phospho-(deoxyribonucleotide)m = (deoxyribonucleotide)n+m + AMP + beta-nicotinamide D-nucleotide.. In terms of biological role, DNA ligase that catalyzes the formation of phosphodiester linkages between 5'-phosphoryl and 3'-hydroxyl groups in double-stranded DNA using NAD as a coenzyme and as the energy source for the reaction. It is essential for DNA replication and repair of damaged DNA. This chain is DNA ligase, found in Herpetosiphon aurantiacus (strain ATCC 23779 / DSM 785 / 114-95).